Consider the following 391-residue polypeptide: Esterase (391 aa).

The N-terminal stretch at 1–26 (MEFPETNNNPIITLSFLLCMLSLAYA) is a signal peptide. Residue serine 41 is the Nucleophile of the active site. N-linked (GlcNAc...) asparagine glycosylation is found at asparagine 186, asparagine 193, and asparagine 313. Catalysis depends on residues aspartate 347 and histidine 350.

The protein belongs to the 'GDSL' lipolytic enzyme family. In terms of processing, the N-terminus is blocked. Post-translationally, glycosylated.

In terms of biological role, has lipase and esterase activities. May be involved in plant defense. The sequence is that of Esterase from Hevea brasiliensis (Para rubber tree).